The chain runs to 313 residues: Homeobox protein CDX-2 (313 aa).

A Phosphoserine modification is found at Ser60. A disordered region spans residues 113-153; the sequence is HAHHHPHHHPHHPAAAPSCASGLLQTLNPGPPGPAATGAAE. Over residues 114-124 the composition is skewed to basic residues; it reads AHHHPHHHPHH. The interval 185–215 is interaction with DNA; the sequence is KDKYRVVYTDHQRLELEKEFHYSRYITIRRK. Positions 185–244 form a DNA-binding region, homeobox; it reads KDKYRVVYTDHQRLELEKEFHYSRYITIRRKAELAATLGLSERQVKIWFQNRRAKERKIN. Residues 227-241 form an interaction with 5-mCpG DNA region; it reads RQVKIWFQNRRAKER. Residues 242–313 are disordered; it reads KINKKKLQQQ…GGVLNPTVTQ (72 aa). Composition is skewed to low complexity over residues 249-261 and 271-300; these read QQQQQQQQQQQLA and QPGSLRSVPEPLSPVSSLQGSVPGSVPGVL. At Ser283 the chain carries Phosphoserine. The short motif at 283 to 295 is the 4S motif; modulates transactivation activity and protein stability element; it reads SPVSSLQGSVPGS.

Belongs to the Caudal homeobox family. As to quaternary structure, can bind DNA as a monomer or homodimer. In terms of processing, ubiquitinated, leading to its degradation by the proteasome. Post-translationally, phosphorylation at Ser-60 reduces transactivation capacity. Phosphorylation at Ser-283 reduces transactivation capacity and also increases ubiquitin-dependent proteasome degradation. Expressed in the intestine.

The protein localises to the nucleus. Its function is as follows. Transcription factor which regulates the transcription of multiple genes expressed in the intestinal epithelium. Binds to the promoter of the intestinal sucrase-isomaltase SI and activates SI transcription. Binds to the DNA sequence 5'-ATAAAAACTTAT-3' in the promoter region of VDR and activates VDR transcription. Binds to and activates transcription of LPH. Activates transcription of CLDN2 and intestinal mucin MUC2. Binds to the 5'-AATTTTTTACAACACCT-3' DNA sequence in the promoter region of CA1 and activates CA1 transcription. Important in broad range of functions from early differentiation to maintenance of the intestinal epithelial lining of both the small and large intestine. Binds preferentially to methylated DNA. The chain is Homeobox protein CDX-2 (CDX2) from Mesocricetus auratus (Golden hamster).